Consider the following 115-residue polypeptide: MAFPTSSAQQAETNRKILEEIQTKKQLLIGLGSTANQMPAPQLLGQPTVTAEFVQNVSATPNAAGGIAAPRSAFNPTSSTTLGFFIPQDSYFGNSFIPVLPRLEPVPTPPAPNSK.

It belongs to the SOSS-C family.

This is SOSS complex subunit C homolog from Drosophila mojavensis (Fruit fly).